We begin with the raw amino-acid sequence, 277 residues long: MSNKIAILLLAVVVAVVACAQAQPSRRHHLVHPLLPRFLPRLHRDSNGHRVVGGFQIDVSDAPYQVSLQYFNSHRCGGSVLDNKWVLTAAHCTQGLDPSSLAVRLGSSEHATGGTLVGVLRTVEHPQYDGNTIDYDFSLMELETELTFSDAVQPVELPEHEEPVEPGTMATVSGWGNTQSAVESSDFLRAANVPTVSHEDCSDAYMWFGEITDRMLCAGYQQGGKDACQGDSGGPLVADGKLVGVVSWGYGCAQPGYPGVYGRVASVRDWVRENSGV.

The N-terminal stretch at 1–19 (MSNKIAILLLAVVVAVVAC) is a signal peptide. The propeptide at 20 to 50 (AQAQPSRRHHLVHPLLPRFLPRLHRDSNGHR) is activation peptide. In terms of domain architecture, Peptidase S1 spans 51–276 (VVGGFQIDVS…VRDWVRENSG (226 aa)). An intrachain disulfide couples C76 to C92. Active-site charge relay system residues include H91 and D136. 2 disulfide bridges follow: C201-C217 and C228-C252. S232 acts as the Charge relay system in catalysis.

Belongs to the peptidase S1 family. In terms of tissue distribution, midgut.

It localises to the secreted. It catalyses the reaction Preferential cleavage: Arg-|-Xaa, Lys-|-Xaa.. In terms of biological role, major function may be to aid in digestion of the blood meal. The protein is Trypsin-2 (TRYP2) of Anopheles gambiae (African malaria mosquito).